Here is a 240-residue protein sequence, read N- to C-terminus: Uridylate kinase (240 aa).

Lys-13–Gly-16 is a binding site for ATP. Gly-55 lines the UMP pocket. The ATP site is built by Gly-56 and Arg-60. UMP is bound by residues Asp-75 and Thr-136–Thr-143. Residues Thr-163, Gln-164, Tyr-169, and Asp-172 each contribute to the ATP site.

It belongs to the UMP kinase family. Homohexamer.

The protein resides in the cytoplasm. The enzyme catalyses UMP + ATP = UDP + ADP. The protein operates within pyrimidine metabolism; CTP biosynthesis via de novo pathway; UDP from UMP (UMPK route): step 1/1. Its activity is regulated as follows. Inhibited by UTP. Catalyzes the reversible phosphorylation of UMP to UDP. The chain is Uridylate kinase from Mesorhizobium japonicum (strain LMG 29417 / CECT 9101 / MAFF 303099) (Mesorhizobium loti (strain MAFF 303099)).